A 299-amino-acid polypeptide reads, in one-letter code: Protease HtpX homolog (299 aa).

Helical transmembrane passes span 14–34 (WLLLLVFFLLLGLVGYGVGNL) and 39–59 (GFGGLILALVIGFIYVVTMIF). His143 contacts Zn(2+). Residue Glu144 is part of the active site. His147 contacts Zn(2+). The next 2 membrane-spanning stretches (helical) occupy residues 153–173 (IRISTIAVALASAITMLAGMA) and 198–218 (IVFLILSLIAIILAPLAATLV). Residue Glu227 coordinates Zn(2+).

It belongs to the peptidase M48B family. The cofactor is Zn(2+).

The protein resides in the cell membrane. The chain is Protease HtpX homolog from Streptococcus thermophilus (strain ATCC BAA-250 / LMG 18311).